A 421-amino-acid chain; its full sequence is Subtilisin-like protease 2 (421 aa).

Positions 1-16 are cleaved as a signal peptide; sequence MQLLNFGLLLLPFVAG. The propeptide occupies 17–122; the sequence is DLAPQPEPLL…VHPDQHFYLA (106 aa). One can recognise an Inhibitor I9 domain in the interval 36-121; that stretch reads QYLVTLKEGL…SVHPDQHFYL (86 aa). In terms of domain architecture, Peptidase S8 spans 131–421; the sequence is RWGLGYMSSK…ERKCKLPKYY (291 aa). Residue Asp-169 is the Charge relay system of the active site. An N-linked (GlcNAc...) asparagine glycan is attached at Asn-192. His-201 functions as the Charge relay system in the catalytic mechanism. Residues Asn-248, Asn-261, and Asn-348 are each glycosylated (N-linked (GlcNAc...) asparagine). The active-site Charge relay system is the Ser-357. An N-linked (GlcNAc...) asparagine glycan is attached at Asn-388.

Belongs to the peptidase S8 family.

It localises to the secreted. Its function is as follows. Secreted subtilisin-like serine protease with keratinolytic activity that contributes to pathogenicity. The protein is Subtilisin-like protease 2 (SUB2) of Trichophyton rubrum (Athlete's foot fungus).